The primary structure comprises 368 residues: mRNA export factor (368 aa).

The interval 15 to 34 is disordered; it reads TSMFGSATTDNHNPMKDIEV. 7 WD repeats span residues 37–79, 84–114, 125–157, 168–206, 215–255, 271–301, and 310–346; these read SPDD…QTIP, MHTG…KMWD, QHDA…KFWD, QLPE…EFRR, HRCV…KDNF, QDIY…SFWD, and TSEQ…EFYN. Thr229 carries the phosphothreonine modification.

The protein belongs to the WD repeat rae1 family. In terms of assembly, interacts with NUMA1 (via N-terminal end of the coiled-coil domain); this interaction promotes spindle formation in mitosis. Interacts with NUP98. Interacts with MYCBP2. Interacts with USP11.

It is found in the cytoplasm. It localises to the nucleus. The protein localises to the cytoskeleton. Its subcellular location is the spindle pole. Plays a role in mitotic bipolar spindle formation. Binds mRNA. May function in nucleocytoplasmic transport and in directly or indirectly attaching cytoplasmic mRNPs to the cytoskeleton. In Macaca fascicularis (Crab-eating macaque), this protein is mRNA export factor (RAE1).